A 214-amino-acid chain; its full sequence is Thymidylate kinase (214 aa).

Residue 10–17 (GGEGAGKS) coordinates ATP.

The protein belongs to the thymidylate kinase family.

It catalyses the reaction dTMP + ATP = dTDP + ADP. Functionally, phosphorylation of dTMP to form dTDP in both de novo and salvage pathways of dTTP synthesis. The sequence is that of Thymidylate kinase from Brucella suis biovar 1 (strain 1330).